A 210-amino-acid chain; its full sequence is Glutathione S-transferase 2 (210 aa).

The 80-residue stretch at 1 to 80 (MDFYYLPLSA…YLVEKYGKQN (80 aa)) folds into the GST N-terminal domain. Residues Ser-9, 50 to 52 (HTI), and 64 to 66 (ESR) each bind glutathione. The region spanning 87–208 (CPKKRALINQ…AGCLEMKKYF (122 aa)) is the GST C-terminal domain.

It belongs to the GST superfamily. Theta family. As to quaternary structure, homodimer.

The catalysed reaction is RX + glutathione = an S-substituted glutathione + a halide anion + H(+). Functionally, conjugation of reduced glutathione to a wide number of exogenous and endogenous hydrophobic electrophiles. The protein is Glutathione S-transferase 2 (Gst2) of Musca domestica (House fly).